Here is a 327-residue protein sequence, read N- to C-terminus: MGGSTRDPGALEGAGILGQSPYERLSQRMLDISGDRGVLKDIIREGTGDTVTPDASVLVKYSGYLEHMDKPFDSNCFRKTPRLMKLGEDITLWGMELGLLSMRKGELARFLFKPAYAYGTLGCPPLIPPNATVLFEIELIDFLDSAESDKFCALSAEQQEQFPLQKVLKVAATEREFGNYLFRQNRFCDAKVRYKRALLLLHRRLATCEEQHLVEPAVLLVLLNLSFVYLKLDRPAMALRYGEQALLIDKRNAKALFRCGQACLLLTEYERARDFLVRAQKEQPCNHDINNELKKLSSHYRDYVDREREMCHRMFAPCGSRSSVGGN.

The region spanning 54 to 143 is the PPIase FKBP-type domain; the sequence is DASVLVKYSG…LFEIELIDFL (90 aa). TPR repeat units lie at residues 171–204, 219–252, and 253–286; these read AATE…LHRR, LLVL…DKRN, and AKAL…QPCN.

The protein belongs to the FKBP6 family. As to quaternary structure, interacts with HSP72/HSPA2 and CLTC. Interacts with GAPDH; leading to inhibit GAPDH catalytic activity. Interacts (via TPR repeats) with HSP90. As to expression, testis-specific.

The protein resides in the cytoplasm. It is found in the cytosol. It localises to the nucleus. Its subcellular location is the chromosome. Co-chaperone required during spermatogenesis to repress transposable elements and prevent their mobilization, which is essential for the germline integrity. Acts via the piRNA metabolic process, which mediates the repression of transposable elements during meiosis by forming complexes composed of piRNAs and Piwi proteins and govern the methylation and subsequent repression of transposons. Acts as a co-chaperone via its interaction with HSP90 and is required for the piRNA amplification process, the secondary piRNA biogenesis. May be required together with HSP90 in removal of 16 nucleotide ping-pong by-products from Piwi complexes, possibly facilitating turnover of Piwi complexes. The chain is Inactive peptidyl-prolyl cis-trans isomerase FKBP6 (Fkbp6) from Mus musculus (Mouse).